Reading from the N-terminus, the 912-residue chain is Protein translocase subunit SecA (912 aa).

ATP-binding positions include Gln87, 105-109 (GEGKT), and Asp508. The tract at residues 869 to 912 (EQMQGGNAPVPVSQVTRDEPKVGRNDPCPCGSGKKYKHCHGQLS) is disordered. Zn(2+) contacts are provided by Cys896, Cys898, Cys907, and His908. The span at 902–912 (KKYKHCHGQLS) shows a compositional bias: basic residues.

The protein belongs to the SecA family. In terms of assembly, monomer and homodimer. Part of the essential Sec protein translocation apparatus which comprises SecA, SecYEG and auxiliary proteins SecDF-YajC and YidC. Zn(2+) serves as cofactor.

It localises to the cell inner membrane. The protein resides in the cytoplasm. It carries out the reaction ATP + H2O + cellular proteinSide 1 = ADP + phosphate + cellular proteinSide 2.. Its function is as follows. Part of the Sec protein translocase complex. Interacts with the SecYEG preprotein conducting channel. Has a central role in coupling the hydrolysis of ATP to the transfer of proteins into and across the cell membrane, serving both as a receptor for the preprotein-SecB complex and as an ATP-driven molecular motor driving the stepwise translocation of polypeptide chains across the membrane. This is Protein translocase subunit SecA from Xanthomonas axonopodis pv. citri (strain 306).